The sequence spans 100 residues: Cell division protein FtsB (100 aa).

Residues 1–3 (MKQ) are Cytoplasmic-facing. Residues 4-21 (LIFLLICLLSLLQYRLWL) traverse the membrane as a helical segment. Residues 22–100 (GDNNLSEYVL…ELRERNPFNR (79 aa)) are Periplasmic-facing. A coiled-coil region spans residues 49 to 73 (RNQILKEEIIDLKRGTEAIEERARN).

Belongs to the FtsB family. As to quaternary structure, part of a complex composed of FtsB, FtsL and FtsQ.

Its subcellular location is the cell inner membrane. Essential cell division protein. May link together the upstream cell division proteins, which are predominantly cytoplasmic, with the downstream cell division proteins, which are predominantly periplasmic. This chain is Cell division protein FtsB, found in Shewanella frigidimarina (strain NCIMB 400).